Here is a 426-residue protein sequence, read N- to C-terminus: Serine--tRNA ligase (426 aa).

230–232 lines the L-serine pocket; that stretch reads TAE. ATP is bound at residue 261-263; sequence RSE. L-serine is bound at residue Glu-284. 348-351 serves as a coordination point for ATP; that stretch reads EISS. Position 384 (Ser-384) interacts with L-serine.

Belongs to the class-II aminoacyl-tRNA synthetase family. Type-1 seryl-tRNA synthetase subfamily. As to quaternary structure, homodimer. The tRNA molecule binds across the dimer.

It localises to the cytoplasm. It catalyses the reaction tRNA(Ser) + L-serine + ATP = L-seryl-tRNA(Ser) + AMP + diphosphate + H(+). It carries out the reaction tRNA(Sec) + L-serine + ATP = L-seryl-tRNA(Sec) + AMP + diphosphate + H(+). Its pathway is aminoacyl-tRNA biosynthesis; selenocysteinyl-tRNA(Sec) biosynthesis; L-seryl-tRNA(Sec) from L-serine and tRNA(Sec): step 1/1. In terms of biological role, catalyzes the attachment of serine to tRNA(Ser). Is also able to aminoacylate tRNA(Sec) with serine, to form the misacylated tRNA L-seryl-tRNA(Sec), which will be further converted into selenocysteinyl-tRNA(Sec). The polypeptide is Serine--tRNA ligase (Novosphingobium aromaticivorans (strain ATCC 700278 / DSM 12444 / CCUG 56034 / CIP 105152 / NBRC 16084 / F199)).